Consider the following 365-residue polypeptide: tRNA(Met) cytidine acetate ligase (365 aa).

Residues 7–20, glycine 96, asparagine 152, and arginine 175 each bind ATP; that span reads IAEFNPFHNGHKYL.

It belongs to the TmcAL family.

Its subcellular location is the cytoplasm. It catalyses the reaction cytidine(34) in elongator tRNA(Met) + acetate + ATP = N(4)-acetylcytidine(34) in elongator tRNA(Met) + AMP + diphosphate. Its function is as follows. Catalyzes the formation of N(4)-acetylcytidine (ac(4)C) at the wobble position of elongator tRNA(Met), using acetate and ATP as substrates. First activates an acetate ion to form acetyladenylate (Ac-AMP) and then transfers the acetyl group to tRNA to form ac(4)C34. This is tRNA(Met) cytidine acetate ligase from Streptococcus pneumoniae serotype 4 (strain ATCC BAA-334 / TIGR4).